The primary structure comprises 409 residues: Transcriptional regulator GME11370 (409 aa).

Residues 17–44 (CHACAASKLKCSKEKPSCARCLKRNKPC) constitute a DNA-binding region (zn(2)-C6 fungal-type). Residues 49–83 (TRRAGRHHGSRSKKVPTISPASAPEPQPFSTTPPD) form a disordered region. Residues 51–62 (RAGRHHGSRSKK) show a composition bias toward basic residues.

Its subcellular location is the nucleus. In terms of biological role, transcriptional regulator; part of the gene cluster that mediates the biosynthesis of dibenzodioxocinones such as pestalotiollide B, a novel class of inhibitors against cholesterol ester transfer protein (CEPT). This chain is Transcriptional regulator GME11370, found in Pestalotiopsis microspora.